A 250-amino-acid chain; its full sequence is uncharacterized protein (250 aa).

This is an uncharacterized protein from Mycobacterium tuberculosis (strain CDC 1551 / Oshkosh).